Reading from the N-terminus, the 105-residue chain is Cuticle protein AM1159 (105 aa).

The Chitin-binding type R&amp;R domain occupies 16 to 81; that stretch reads DGNFNYNFQT…PESPLLPVGP (66 aa). Positions 25–46 are disordered; that stretch reads TSNGIEDTKTGTPGSQGQSNMQ.

Arthrodial membrane.

This Cancer pagurus (Rock crab) protein is Cuticle protein AM1159.